The following is a 545-amino-acid chain: Chaperonin GroEL (545 aa).

ATP contacts are provided by residues Thr-30–Pro-33, Lys-51, Asp-87–Thr-91, Gly-415, and Asp-495.

Belongs to the chaperonin (HSP60) family. In terms of assembly, forms a cylinder of 14 subunits composed of two heptameric rings stacked back-to-back. Interacts with the co-chaperonin GroES.

It localises to the cytoplasm. The enzyme catalyses ATP + H2O + a folded polypeptide = ADP + phosphate + an unfolded polypeptide.. Together with its co-chaperonin GroES, plays an essential role in assisting protein folding. The GroEL-GroES system forms a nano-cage that allows encapsulation of the non-native substrate proteins and provides a physical environment optimized to promote and accelerate protein folding. The protein is Chaperonin GroEL of Shewanella sp. (strain W3-18-1).